We begin with the raw amino-acid sequence, 195 residues long: Pyridoxal 5'-phosphate synthase subunit PdxT (195 aa).

49 to 51 (GES) is an L-glutamine binding site. The Nucleophile role is filled by cysteine 81. L-glutamine-binding positions include arginine 113 and 141–142 (IR). Catalysis depends on charge relay system residues histidine 177 and glutamate 179.

The protein belongs to the glutaminase PdxT/SNO family. In the presence of PdxS, forms a dodecamer of heterodimers. Only shows activity in the heterodimer.

It catalyses the reaction aldehydo-D-ribose 5-phosphate + D-glyceraldehyde 3-phosphate + L-glutamine = pyridoxal 5'-phosphate + L-glutamate + phosphate + 3 H2O + H(+). It carries out the reaction L-glutamine + H2O = L-glutamate + NH4(+). The protein operates within cofactor biosynthesis; pyridoxal 5'-phosphate biosynthesis. Functionally, catalyzes the hydrolysis of glutamine to glutamate and ammonia as part of the biosynthesis of pyridoxal 5'-phosphate. The resulting ammonia molecule is channeled to the active site of PdxS. The polypeptide is Pyridoxal 5'-phosphate synthase subunit PdxT (Mycolicibacterium vanbaalenii (strain DSM 7251 / JCM 13017 / BCRC 16820 / KCTC 9966 / NRRL B-24157 / PYR-1) (Mycobacterium vanbaalenii)).